A 436-amino-acid chain; its full sequence is MNNNQLSAQLARQLGAHRHLLVAFSGGLDSSVLLHLLVGLRQQLPDLQLRAVHVHHGLSAFADQWVTHCRQQCVAWQLPLVVQHVQVDSQQGGIEAAARAARYSAFASTLAADETLLTAQHLDDQCETFLLALKRGSGPAGLSAMAAQTSLGNNHLLRPLLGHSRQQLEAYAQQHQLSWIEDDSNQDPRFDRNFLRLQVLPLLNQRWPHFAAATARSASLCAEQEQLLDELLAEQLHNLLDEDRALAIDGLLTCSAARRFALLRRWIALFGVTMPSREQLQRLWEEVALSREDAEPQLQLGQYQFRRFRRRLYLLPLMADLREISLSWSLDDSLMLPDGLGELVSGEGDICLRAPQSQQKVSIRFSAQGKHRILGRAHSRPIKKLWQELGIPPWQRERIPLIYYDDQLIAALGIFVSEAGQTPEGQQPWRLHWRKK.

S25 to S30 serves as a coordination point for ATP.

Belongs to the tRNA(Ile)-lysidine synthase family.

The protein localises to the cytoplasm. The catalysed reaction is cytidine(34) in tRNA(Ile2) + L-lysine + ATP = lysidine(34) in tRNA(Ile2) + AMP + diphosphate + H(+). Functionally, ligates lysine onto the cytidine present at position 34 of the AUA codon-specific tRNA(Ile) that contains the anticodon CAU, in an ATP-dependent manner. Cytidine is converted to lysidine, thus changing the amino acid specificity of the tRNA from methionine to isoleucine. This is tRNA(Ile)-lysidine synthase from Serratia proteamaculans (strain 568).